We begin with the raw amino-acid sequence, 381 residues long: Cyclic AMP-AMP-GMP synthase (381 aa).

ATP is bound by residues Gln-51, Ser-53, Arg-56, Asp-69, Asp-71, and Arg-109. Catalysis depends on residues Asp-69 and Asp-71. Residues Asp-69 and Asp-71 each contribute to the Mg(2+) site. Residue Asp-121 is part of the active site. Residues Asp-121 and Asp-196 each coordinate Mg(2+). Asp-196, Arg-197, Arg-204, Thr-205, Gln-210, Lys-233, and Tyr-250 together coordinate ATP. The Mg(2+) site is built by Asn-258 and Leu-260. Residues Val-304 and Arg-307 each coordinate ATP. A disordered region spans residues 348 to 381 (GSKFPLPGPQGGDRNGGFTTPSKPAEPQKTGRFA).

Belongs to the CD-NTase family. D02 subfamily. In terms of assembly, monomer. Crystallizes as a Cap2 homodimer bound on each side by a CdnD monomer. It depends on Mg(2+) as a cofactor. In bacteria expressing cap4-dncV-cap2-cap3, this protein is conjugated to a number of other proteins by Cap2, probably via this protein's C-terminal Ala residue. More conjugated DncV is found in the absence of Cap3.

It catalyses the reaction GTP + 2 ATP = 3',3',3'-cAAG + 3 diphosphate. With respect to regulation, primed for activation by Cap2 which conjugates it to cellular proteins; activation is target protein-specific (green fluorescent protein does not activate the enzyme), but which protein(s) activate it is unclear. In terms of biological role, cyclic nucleotide synthase (second messenger synthase) of a CBASS antivirus system. CBASS (cyclic oligonucleotide-based antiphage signaling system) provides immunity against bacteriophages. The CD-NTase protein (CdnD, this protein) synthesizes cyclic nucleotides in response to infection; these serve as specific second messenger signals. The signals activate a diverse range of effectors, leading to bacterial cell death and thus abortive phage infection. A type II-C(AAG) CBASS system. Functionally, cyclic trinucleotide synthase that catalyzes the synthesis of 3',3',3'-cyclic AMP-AMP-GMP (cAAG) as the major product, a second messenger for cell signal transduction. Uses ATP as the first donor nucleotide, followed by GTP. Protects E.coli against phage T2 infection. When the cdnD-cap2-cap3-cap4 operon is introduced in E.coli there is a more than 10(3) decrease in the efficiency of T2 plaque formation. The operon does not protect against phage T5 and only about 10-fold against T7. Expression of cdnD-cap4 alone protects E.coli against phage T2 infection. This is Cyclic AMP-AMP-GMP synthase from Enterobacter hormaechei subsp. hoffmannii (strain UCI 50).